A 624-amino-acid polypeptide reads, in one-letter code: Probable potassium transport system protein Kup (624 aa).

12 helical membrane-spanning segments follow: residues 13–33 (LALGALGVVFGDIGTSPLYTM), 52–72 (ILSLIFWALILVVSLKYVLVI), 102–122 (WIIMSLGFLGASLFFGDSLIT), 139–159 (PALHPFILPLALGILVGLFAI), 170–190 (LFGPIMLLWFAVLGVLGAIGI), 208–228 (FFMTHGTAGFLILGAVVLAIT), 249–269 (WFGFVLPALVVNYFGQGALLL), 291–311 (MVALATAATVIASQAVISGAF), 339–359 (IYIPFVNWTLAAGVALLVLGF), 368–388 (AYGIAVTATFAIDTVLLALLM), 399–419 (TLVAAALFLTLDLAFFGANAV), and 421–441 (IPEGGWFPLVVAVVVFTILVT).

Belongs to the HAK/KUP transporter (TC 2.A.72) family.

The protein localises to the cell inner membrane. It carries out the reaction K(+)(in) + H(+)(in) = K(+)(out) + H(+)(out). Its function is as follows. Transport of potassium into the cell. Likely operates as a K(+):H(+) symporter. The sequence is that of Probable potassium transport system protein Kup from Thiobacillus denitrificans (strain ATCC 25259 / T1).